The primary structure comprises 257 residues: Urease accessory protein UreD 3 (257 aa).

The segment at 1–22 (MSVRATARLRAEPDGRDGTALP) is disordered.

It belongs to the UreD family. In terms of assembly, ureD, UreF and UreG form a complex that acts as a GTP-hydrolysis-dependent molecular chaperone, activating the urease apoprotein by helping to assemble the nickel containing metallocenter of UreC. The UreE protein probably delivers the nickel.

It is found in the cytoplasm. In terms of biological role, required for maturation of urease via the functional incorporation of the urease nickel metallocenter. The protein is Urease accessory protein UreD 3 of Streptomyces griseus subsp. griseus (strain JCM 4626 / CBS 651.72 / NBRC 13350 / KCC S-0626 / ISP 5235).